The following is a 364-amino-acid chain: Chorismate synthase (364 aa).

Residue Arg-47 participates in NADP(+) binding. FMN contacts are provided by residues 125–127 (RFS), Gly-285, 300–304 (KPTPS), and Arg-327.

It belongs to the chorismate synthase family. Homotetramer. The cofactor is FMNH2.

The enzyme catalyses 5-O-(1-carboxyvinyl)-3-phosphoshikimate = chorismate + phosphate. Its pathway is metabolic intermediate biosynthesis; chorismate biosynthesis; chorismate from D-erythrose 4-phosphate and phosphoenolpyruvate: step 7/7. Functionally, catalyzes the anti-1,4-elimination of the C-3 phosphate and the C-6 proR hydrogen from 5-enolpyruvylshikimate-3-phosphate (EPSP) to yield chorismate, which is the branch point compound that serves as the starting substrate for the three terminal pathways of aromatic amino acid biosynthesis. This reaction introduces a second double bond into the aromatic ring system. The chain is Chorismate synthase from Dehalococcoides mccartyi (strain ATCC BAA-2100 / JCM 16839 / KCTC 5957 / BAV1).